The chain runs to 274 residues: Large ribosomal subunit protein uL2 (274 aa).

Residues 223 to 274 (VVMNPVDHPHGGGEGRTSGGRHPVSPWGVPTKGYKTRSNKRTDKYIVRRRNK) form a disordered region.

This sequence belongs to the universal ribosomal protein uL2 family. Part of the 50S ribosomal subunit. Forms a bridge to the 30S subunit in the 70S ribosome.

In terms of biological role, one of the primary rRNA binding proteins. Required for association of the 30S and 50S subunits to form the 70S ribosome, for tRNA binding and peptide bond formation. It has been suggested to have peptidyltransferase activity; this is somewhat controversial. Makes several contacts with the 16S rRNA in the 70S ribosome. This Vibrio cholerae serotype O1 (strain M66-2) protein is Large ribosomal subunit protein uL2.